The chain runs to 835 residues: Microcephalin (835 aa).

Positions 1–93 (MAAPILKDVV…AHIDESLFPA (93 aa)) constitute a BRCT 1 domain. Ser-279, Ser-287, Ser-296, and Ser-333 each carry phosphoserine. 2 disordered regions span residues 313 to 381 (PDQK…RRSI) and 419 to 443 (DNLKERYSENLPPESQLPSSPAQLS). Thr-335 carries the phosphothreonine modification. A compositionally biased stretch (basic residues) spans 343-361 (LLIHSRPRSSSVKRKRVSH). Polar residues predominate over residues 434–443 (QLPSSPAQLS). A Phosphoserine modification is found at Ser-548. The interval 555-584 (AVGLKSTQNKGTTSKISNSSEGEAQSEHEP) is disordered. A compositionally biased stretch (polar residues) spans 559–577 (KSTQNKGTTSKISNSSEGE). 2 consecutive BRCT domains span residues 640-730 (SGRG…PFEL) and 751-833 (YRGT…NYLL).

In terms of assembly, interacts with CDC27 and maybe other components of the APC/C complex. Interacts with histone variant H2AX under DNA damage conditions. In terms of tissue distribution, expressed in fetal brain, liver and kidney.

Its subcellular location is the cytoplasm. It is found in the cytoskeleton. It localises to the microtubule organizing center. The protein resides in the centrosome. In terms of biological role, implicated in chromosome condensation and DNA damage induced cellular responses. May play a role in neurogenesis and regulation of the size of the cerebral cortex. The sequence is that of Microcephalin from Homo sapiens (Human).